The primary structure comprises 203 residues: Imidazoleglycerol-phosphate dehydratase (203 aa).

This sequence belongs to the imidazoleglycerol-phosphate dehydratase family.

The protein resides in the cytoplasm. It carries out the reaction D-erythro-1-(imidazol-4-yl)glycerol 3-phosphate = 3-(imidazol-4-yl)-2-oxopropyl phosphate + H2O. Its pathway is amino-acid biosynthesis; L-histidine biosynthesis; L-histidine from 5-phospho-alpha-D-ribose 1-diphosphate: step 6/9. This is Imidazoleglycerol-phosphate dehydratase from Deinococcus geothermalis (strain DSM 11300 / CIP 105573 / AG-3a).